Here is a 553-residue protein sequence, read N- to C-terminus: Cytokine-like nuclear factor N-PAC (553 aa).

The PWWP domain occupies 8-66; the sequence is LGDLVWGKLGRYPPWPGKIVNPPKDLKKPRGKKCFFVKFFGTEDHAWIKVEQLKPYHAH. Basic and acidic residues-rich tracts occupy residues 92–145 and 162–182; these read RAKG…EGKK and RAQE…KDLT. Residues 92-188 are disordered; the sequence is RAKGKDQTSS…KDLTIPESST (97 aa). Residue Ser130 is modified to Phosphoserine. A Glycyl lysine isopeptide (Lys-Gly) (interchain with G-Cter in SUMO2) cross-link involves residue Lys135. Ser167 bears the Phosphoserine mark. Residues 168–180 constitute a DNA-binding region (a.T hook); the sequence is PRKRGRPPKDEKD. Glycyl lysine isopeptide (Lys-Gly) (interchain with G-Cter in SUMO2) cross-links involve residues Lys176, Lys179, Lys201, and Lys211. Residues 214–217 form an interaction with histone H3 region; it reads DPHF. The segment at 216-225 is interaction with KDM1B; that stretch reads HFHHFLLSQT. Glycyl lysine isopeptide (Lys-Gly) (interchain with G-Cter in SUMO2) cross-links involve residues Lys227, Lys237, Lys240, and Lys269. A dehydrogenase domain region spans residues 261–553; the sequence is GSITPTDKKI…MSAVYRAYIH (293 aa). Residue 271–285 participates in NAD(+) binding; the sequence is GFLGLGLMGSGIVSN. A Glycyl lysine isopeptide (Lys-Gly) (interchain with G-Cter in SUMO2) cross-link involves residue Lys302. Residues Thr362 and Lys505 each contribute to the NAD(+) site. Position 540 is a phosphoserine (Ser540).

This sequence belongs to the HIBADH-related family. NP60 subfamily. Homotetramere. Interacts with MAPK14. Interacts with KDM1B at nucleosomes; this interaction stimulates H3K4me1 and H3K4me2 demethylation. Binds to mononucleosomes. Interacts with GATA4; the interaction is required for a synergistic activation of GATA4 target genes transcription.

The protein localises to the nucleus. It is found in the chromosome. Functionally, cytokine-like nuclear factor with chromatin gene reader activity involved in chromatin modification and regulation of gene expression. Acts as a nucleosome-destabilizing factor that is recruited to genes during transcriptional activation. Recognizes and binds histone H3 without a preference for specific epigenetic markers and also binds DNA. Interacts with KDM1B and promotes its histone demethylase activity by facilitating the capture of H3 tails, they form a multifunctional enzyme complex that modifies transcribed chromatin and facilitates Pol II transcription through nucleosomes. Stimulates the acetylation of 'Lys-56' of nucleosomal histone H3 (H3K56ac) by EP300. With GATA4, co-binds a defined set of heart development genes and coregulates their expression during cardiomyocyte differentiation. Regulates p38 MAP kinase activity by mediating stress activation of MAPK14/p38alpha and specifically regulating MAPK14 signaling. Indirectly promotes phosphorylation of MAPK14 and activation of ATF2. The phosphorylation of MAPK14 requires upstream activity of MAP2K4 and MAP2K6. This chain is Cytokine-like nuclear factor N-PAC, found in Homo sapiens (Human).